The chain runs to 423 residues: Protein SOSEKI 5 (423 aa).

Residues M1–I33 are disordered. Positions R19–I33 are enriched in basic and acidic residues. The DIX-like oligomerization domain stretch occupies residues R45–D136. Disordered stretches follow at residues S150–I172 and S196–T258. The span at S196–Q211 shows a compositional bias: polar residues. 2 short sequence motifs (association to cell membranes) span residues A233–S234 and C303–G304. The segment at S379–Q423 is disordered. Basic residues predominate over residues C406 to A415.

The protein belongs to the SOSEKI family. Homodimer. Forms long polymer filaments with other SOKs proteins polymers (e.g. SOK1, SOK2, SOK3 and SOK4) crucial for polar localization and biological activity. Binds to ANGUSTIFOLIA (AN). In terms of tissue distribution, expressed during embryogenesis and in roots.

Its subcellular location is the cell membrane. In terms of biological role, SOSEKI proteins (SOK1-5) locally interpret global polarity cues and can influence cell division orientation to coordinate cell polarization relative to body axes. This Arabidopsis thaliana (Mouse-ear cress) protein is Protein SOSEKI 5.